A 616-amino-acid polypeptide reads, in one-letter code: Glycogenin-1 (616 aa).

L10, Y16, and R95 together coordinate UDP. Residues L10, Y16, R95, K104, D120, D122, N158, S159, D185, D188, and Q189 each coordinate UDP-alpha-D-glucose. D120 and D122 together coordinate UDP. Residues D120 and D122 each contribute to the Mn(2+) site. Residue Y230 is glycosylated (O-linked (Glc...) tyrosine). The UDP site is built by H247, G250, and K253. Position 247 (H247) interacts with Mn(2+). The UDP-alpha-D-glucose site is built by G250 and K253. Positions 283–302 (HQLNNEVSKPKISDSDKTET) are enriched in basic and acidic residues. Disordered regions lie at residues 283 to 320 (HQLN…PTTN), 335 to 354 (NQNA…NPVP), 371 to 525 (TNQP…EKDK), and 553 to 588 (RDAT…EMPN). Basic and acidic residues predominate over residues 377 to 386 (ESREYSKEND). Positions 400–419 (SPPNSTQELNSSYSVVSTQA) are enriched in polar residues. A compositionally biased stretch (low complexity) spans 450 to 461 (STAASSNNNVSN). Composition is skewed to polar residues over residues 462-485 (QPDG…PSNP) and 492-503 (DNIQKPSVSTND). A compositionally biased stretch (basic and acidic residues) spans 567-576 (DKQEDMKLTA). Over residues 577–586 (EETNQPQQEM) the composition is skewed to polar residues. Y598 carries an O-linked (Glc...) tyrosine glycan.

It belongs to the glycosyltransferase 8 family. Glycogenin subfamily. It depends on Mn(2+) as a cofactor.

The protein localises to the cytoplasm. The protein resides in the vacuole. It carries out the reaction L-tyrosyl-[glycogenin] + UDP-alpha-D-glucose = alpha-D-glucosyl-L-tyrosyl-[glycogenin] + UDP + H(+). The enzyme catalyses [1,4-alpha-D-glucosyl](n)-L-tyrosyl-[glycogenin] + UDP-alpha-D-glucose = [1,4-alpha-D-glucosyl](n+1)-L-tyrosyl-[glycogenin] + UDP + H(+). Its function is as follows. Self-glucosylating initiator of glycogen synthesis. It catalyzes the formation of a short alpha (1,4)-glucosyl chain covalently attached via a glucose 1-O-tyrosyl linkage to internal tyrosine residues and these chains act as primers for the elongation reaction catalyzed by glycogen synthase. Capable of transferring glucosyl residues to unbound acceptors such as free oligoglucans or oligoglucan derivatives. The polypeptide is Glycogenin-1 (Saccharomyces cerevisiae (strain ATCC 204508 / S288c) (Baker's yeast)).